Here is a 316-residue protein sequence, read N- to C-terminus: 4-diphosphocytidyl-2-C-methyl-D-erythritol kinase (316 aa).

K14 is an active-site residue. 96 to 106 (PMGAGLGGGSS) contributes to the ATP binding site. Residue D138 is part of the active site.

This sequence belongs to the GHMP kinase family. IspE subfamily.

It catalyses the reaction 4-CDP-2-C-methyl-D-erythritol + ATP = 4-CDP-2-C-methyl-D-erythritol 2-phosphate + ADP + H(+). It functions in the pathway isoprenoid biosynthesis; isopentenyl diphosphate biosynthesis via DXP pathway; isopentenyl diphosphate from 1-deoxy-D-xylulose 5-phosphate: step 3/6. Functionally, catalyzes the phosphorylation of the position 2 hydroxy group of 4-diphosphocytidyl-2C-methyl-D-erythritol. This chain is 4-diphosphocytidyl-2-C-methyl-D-erythritol kinase, found in Solibacter usitatus (strain Ellin6076).